A 456-amino-acid chain; its full sequence is Bifunctional protein GlmU (456 aa).

The segment at 1 to 229 (MLNNAMSVVI…LSEVEGVNNR (229 aa)) is pyrophosphorylase. UDP-N-acetyl-alpha-D-glucosamine contacts are provided by residues 11 to 14 (LAAG), lysine 25, glutamine 76, 81 to 82 (GT), 103 to 105 (YGD), glycine 140, glutamate 154, asparagine 169, and asparagine 227. Aspartate 105 contacts Mg(2+). Residue asparagine 227 participates in Mg(2+) binding. The interval 230-250 (LQLSRLERVYQSEQAEKLLLA) is linker. Residues 251–456 (GVMLRDPARF…EGWRRPVKKK (206 aa)) form an N-acetyltransferase region. UDP-N-acetyl-alpha-D-glucosamine-binding residues include arginine 333 and lysine 351. Catalysis depends on histidine 363, which acts as the Proton acceptor. UDP-N-acetyl-alpha-D-glucosamine-binding residues include tyrosine 366 and asparagine 377. Acetyl-CoA is bound by residues alanine 380, 386 to 387 (NY), serine 405, alanine 423, and arginine 440.

The protein in the N-terminal section; belongs to the N-acetylglucosamine-1-phosphate uridyltransferase family. It in the C-terminal section; belongs to the transferase hexapeptide repeat family. As to quaternary structure, homotrimer. It depends on Mg(2+) as a cofactor.

The protein localises to the cytoplasm. The catalysed reaction is alpha-D-glucosamine 1-phosphate + acetyl-CoA = N-acetyl-alpha-D-glucosamine 1-phosphate + CoA + H(+). It catalyses the reaction N-acetyl-alpha-D-glucosamine 1-phosphate + UTP + H(+) = UDP-N-acetyl-alpha-D-glucosamine + diphosphate. The protein operates within nucleotide-sugar biosynthesis; UDP-N-acetyl-alpha-D-glucosamine biosynthesis; N-acetyl-alpha-D-glucosamine 1-phosphate from alpha-D-glucosamine 6-phosphate (route II): step 2/2. It participates in nucleotide-sugar biosynthesis; UDP-N-acetyl-alpha-D-glucosamine biosynthesis; UDP-N-acetyl-alpha-D-glucosamine from N-acetyl-alpha-D-glucosamine 1-phosphate: step 1/1. Its pathway is bacterial outer membrane biogenesis; LPS lipid A biosynthesis. Catalyzes the last two sequential reactions in the de novo biosynthetic pathway for UDP-N-acetylglucosamine (UDP-GlcNAc). The C-terminal domain catalyzes the transfer of acetyl group from acetyl coenzyme A to glucosamine-1-phosphate (GlcN-1-P) to produce N-acetylglucosamine-1-phosphate (GlcNAc-1-P), which is converted into UDP-GlcNAc by the transfer of uridine 5-monophosphate (from uridine 5-triphosphate), a reaction catalyzed by the N-terminal domain. This Escherichia coli (strain 55989 / EAEC) protein is Bifunctional protein GlmU.